We begin with the raw amino-acid sequence, 253 residues long: uncharacterized protein (253 aa).

10–34 is an NADP(+) binding site; the sequence is LVTGASSGLGRGLALWLARRGVRVF. Ser-142 serves as a coordination point for substrate. The active-site Proton acceptor is Tyr-155.

It belongs to the short-chain dehydrogenases/reductases (SDR) family.

This is an uncharacterized protein from Myxococcus xanthus (strain DK1622).